Consider the following 25-residue polypeptide: Gamma-conotoxin PiVIIA (25 aa).

3 disulfides stabilise this stretch: cysteine 1-cysteine 15, cysteine 8-cysteine 19, and cysteine 14-cysteine 24. Proline 4 carries the post-translational modification 4-hydroxyproline. 2 positions are modified to 4-carboxyglutamate: glutamate 13 and glutamate 20.

Belongs to the conotoxin O2 superfamily. In terms of tissue distribution, expressed by the venom duct.

It localises to the secreted. Functionally, micromolar concentrations of PiVIIA increase the magnitude of the macroscopic calcium current in DRG neurons from rat. An increase, even modest of the calcium current, may have a significant impact in the excitability and electrical activity of neurons, and may set up PiVIIA as a member of the pharmacological family of the gamma-conotoxins. The chain is Gamma-conotoxin PiVIIA from Conus princeps (Prince cone).